The sequence spans 278 residues: MIEKKILLTDCPDDKGLIAKITNICYKHQLNILHNNEFVDFETKHFFMRTELEGIFNEATLLEDLKYSLPEETNCRLIGTQRKRIVILVTKEAHCLGDILMKNYYGALDVEIAAVIGNHDNLRELVERFNIPFHLVSHENLTRVEHDKLLAEKIDEYTPDYIVLAKYMRVLNPEFVARYPNRVINIHHSFLPAFIGAKPYQQAYKRGVKIIGATAHFINNELDQGPIIMQNVINVDHTYNAEAMMRAGRDVEKTVLSRALDLALHDRIFVYKNKTVVL.

The region spanning 6-85 is the ACT domain; the sequence is ILLTDCPDDK…RLIGTQRKRI (80 aa). Asp-223 is a catalytic residue.

The protein belongs to the PurU family.

It carries out the reaction (6R)-10-formyltetrahydrofolate + H2O = (6S)-5,6,7,8-tetrahydrofolate + formate + H(+). It participates in purine metabolism; IMP biosynthesis via de novo pathway; formate from 10-formyl-5,6,7,8-tetrahydrofolate: step 1/1. Its function is as follows. Catalyzes the hydrolysis of 10-formyltetrahydrofolate (formyl-FH4) to formate and tetrahydrofolate (FH4). This is Formyltetrahydrofolate deformylase from Haemophilus influenzae (strain ATCC 51907 / DSM 11121 / KW20 / Rd).